A 465-amino-acid chain; its full sequence is ATP synthase subunit beta (465 aa).

152-159 (GGAGVGKT) contributes to the ATP binding site.

Belongs to the ATPase alpha/beta chains family. F-type ATPases have 2 components, CF(1) - the catalytic core - and CF(0) - the membrane proton channel. CF(1) has five subunits: alpha(3), beta(3), gamma(1), delta(1), epsilon(1). CF(0) has three main subunits: a(1), b(2) and c(9-12). The alpha and beta chains form an alternating ring which encloses part of the gamma chain. CF(1) is attached to CF(0) by a central stalk formed by the gamma and epsilon chains, while a peripheral stalk is formed by the delta and b chains.

It localises to the cell membrane. It carries out the reaction ATP + H2O + 4 H(+)(in) = ADP + phosphate + 5 H(+)(out). Its function is as follows. Produces ATP from ADP in the presence of a proton gradient across the membrane. The catalytic sites are hosted primarily by the beta subunits. This is ATP synthase subunit beta from Desulfitobacterium hafniense (strain Y51).